Reading from the N-terminus, the 187-residue chain is UPF0398 protein LJ_1195 (187 aa).

The protein belongs to the UPF0398 family.

The chain is UPF0398 protein LJ_1195 from Lactobacillus johnsonii (strain CNCM I-12250 / La1 / NCC 533).